A 686-amino-acid polypeptide reads, in one-letter code: DNA ligase (686 aa).

NAD(+) is bound by residues 31-35 (DSEYD), 80-81 (SL), and glutamate 109. Residue lysine 111 is the N6-AMP-lysine intermediate of the active site. NAD(+) is bound by residues arginine 132, glutamate 166, lysine 280, and lysine 304. Zn(2+) is bound by residues cysteine 430, cysteine 433, cysteine 448, and cysteine 453. A BRCT domain is found at 611-686 (NVEGILSGKT…IWSEQDLLDL (76 aa)).

It belongs to the NAD-dependent DNA ligase family. LigA subfamily. Mg(2+) serves as cofactor. Requires Mn(2+) as cofactor.

The enzyme catalyses NAD(+) + (deoxyribonucleotide)n-3'-hydroxyl + 5'-phospho-(deoxyribonucleotide)m = (deoxyribonucleotide)n+m + AMP + beta-nicotinamide D-nucleotide.. In terms of biological role, DNA ligase that catalyzes the formation of phosphodiester linkages between 5'-phosphoryl and 3'-hydroxyl groups in double-stranded DNA using NAD as a coenzyme and as the energy source for the reaction. It is essential for DNA replication and repair of damaged DNA. The chain is DNA ligase from Lactococcus lactis subsp. cremoris (strain SK11).